Here is a 325-residue protein sequence, read N- to C-terminus: uncharacterized protein (325 aa).

Positions 1–75 (MSQPPEHPGN…PPPGYPTHLQ (75 aa)) are disordered. The span at 24-70 (YPPPGYGAPPPPPGYGPPPGTYLPPGYNAPPPPPGYGPPPGPPPPGY) shows a compositional bias: pro residues. 4 helical membrane-spanning segments follow: residues 96–116 (AVTL…VIGA), 153–173 (IVMF…HAGI), 205–225 (LLIV…GLIF), and 273–293 (LVGE…AALI).

The protein resides in the cell membrane. This is an uncharacterized protein from Mycobacterium tuberculosis (strain ATCC 25618 / H37Rv).